Reading from the N-terminus, the 134-residue chain is MGTLQGAALRSRERPSWPQETHGHRERTEEGCAVAAFSADALRTGGQELEQTGLRPKAGAPPMPDLLGHRICTDIGKGWRMDGGRTCSCSSFCRCPERGARRSSPDAPGLALDFPLLLDLLWHLCSWTSQPLEL.

The tract at residues 1 to 30 is disordered; that stretch reads MGTLQGAALRSRERPSWPQETHGHRERTEE. A compositionally biased stretch (basic and acidic residues) spans 10 to 30; that stretch reads RSRERPSWPQETHGHRERTEE.

This is an uncharacterized protein from Homo sapiens (Human).